The sequence spans 257 residues: Cytosolic Fe-S cluster assembly factor NUBP2 homolog (257 aa).

14–21 contacts ATP; the sequence is GKGGVGKS. [4Fe-4S] cluster is bound by residues Cys188 and Cys191.

It belongs to the Mrp/NBP35 ATP-binding proteins family. NUBP2/CFD1 subfamily. In terms of assembly, heterotetramer of 2 NUBP1 and 2 NUBP2 chains. [4Fe-4S] cluster is required as a cofactor.

It localises to the cytoplasm. Its function is as follows. Component of the cytosolic iron-sulfur (Fe/S) protein assembly (CIA) machinery. Required for maturation of extramitochondrial Fe-S proteins. The NUBP1-NUBP2 heterotetramer forms a Fe-S scaffold complex, mediating the de novo assembly of an Fe-S cluster and its transfer to target apoproteins. This Culex quinquefasciatus (Southern house mosquito) protein is Cytosolic Fe-S cluster assembly factor NUBP2 homolog.